Consider the following 48-residue polypeptide: Light-harvesting polypeptide B-885 beta-2 chain (48 aa).

The Cytoplasmic portion of the chain corresponds to 1–20 (AEDRKSLSGLTEQEAQEFGT). A helical transmembrane segment spans residues 21–43 (LYTQGVAFVAVIAIVAHALVWAW). Residue histidine 37 participates in a bacteriochlorophyll binding. At 44-48 (RPWLQ) the chain is on the periplasmic side.

It belongs to the antenna complex beta subunit family. As to quaternary structure, the core complex is formed by different alpha and beta chains, binding bacteriochlorophyll molecules, and arranged most probably in tetrameric structures disposed around the reaction center. The non-pigmented gamma chains may constitute additional components.

The protein localises to the cell inner membrane. In terms of biological role, antenna complexes are light-harvesting systems, which transfer the excitation energy to the reaction centers. This chain is Light-harvesting polypeptide B-885 beta-2 chain, found in Rhodocyclus tenuis (Rhodospirillum tenue).